We begin with the raw amino-acid sequence, 160 residues long: MSVTKKPDLNDPVLRAKLAKGFGHNTYGEPAWPNDLLYIFPVVIFGTFACCIGLAVLDPAAMGEPANPFATPLEILPEWYFYPVFQILRTVPNKLLGVLAMAAVPVGLLTVPFIESINKFQNPYRRPIATILFLVGTLVAVWLGIGATFPIDISLTLGLF.

A run of 3 helical transmembrane segments spans residues 36–56 (LLYI…GLAV), 95–115 (LLGV…PFIE), and 131–151 (ILFL…TFPI).

It belongs to the cytochrome b family. PetD subfamily. The 4 large subunits of the cytochrome b6-f complex are cytochrome b6, subunit IV (17 kDa polypeptide, petD), cytochrome f and the Rieske protein, while the 4 small subunits are petG, petL, petM and petN. The complex functions as a dimer.

The protein resides in the plastid. The protein localises to the chloroplast thylakoid membrane. Its function is as follows. Component of the cytochrome b6-f complex, which mediates electron transfer between photosystem II (PSII) and photosystem I (PSI), cyclic electron flow around PSI, and state transitions. In Chlamydomonas moewusii (Chlamydomonas eugametos), this protein is Cytochrome b6-f complex subunit 4.